Here is an 845-residue protein sequence, read N- to C-terminus: Taste receptor type 1 member 3 (845 aa).

A signal peptide spans 1-18 (MAGLMLLSLMALLGLGAG). Over 19–568 (APLCLSRQLR…FLAWGQPAVL (550 aa)) the chain is Extracellular. Residues Asn128 and Asn262 are each glycosylated (N-linked (GlcNAc...) asparagine). Residues 569–589 (VLLILLALALGLVLVALGLFI) form a helical membrane-spanning segment. At 590–601 (RHRDSPLVQASG) the chain is on the cytoplasmic side. The helical transmembrane segment at 602–622 (GPRACFGLACLGLVCLSVLLF) threads the bilayer. The Extracellular segment spans residues 623–637 (PGQPGPASCLAQQPL). Residues 638–658 (LHLPLTGCLSTLFLQAAQIFV) form a helical membrane-spanning segment. Topologically, residues 659–680 (GSELPSSWADQLRRCLQGPWAW) are cytoplasmic. A helical membrane pass occupies residues 681-701 (LLVLLALLAEAALCAWYLVAF). The Extracellular segment spans residues 702–727 (PPEVVTDWWVLPTQVLVHCRMRSWIS). Residues 728–748 (FGLLHAINAMLAFLCFLGTFL) form a helical membrane-spanning segment. The Cytoplasmic portion of the chain corresponds to 749–760 (VQSRPGRYNGAR). The helical transmembrane segment at 761–781 (GLTFAMLAYFITWISFVPLFA) threads the bilayer. The Extracellular portion of the chain corresponds to 782-789 (NVHVAYQP). Residues 790-810 (TVQMAAILLCALGILATFHLP) form a helical membrane-spanning segment. Residues 811 to 845 (KCYLLLQQLELNNPEFFLGDDARGQGSSGSGGKET) lie on the Cytoplasmic side of the membrane.

The protein belongs to the G-protein coupled receptor 3 family. TAS1R subfamily. As to quaternary structure, forms homodimers or heterodimers with TAS1R1 and TAS1R2.

It is found in the cell membrane. Functionally, putative taste receptor. TAS1R1/TAS1R3 responds to the umami taste stimulus (the taste of monosodium glutamate). TAS1R2/TAS1R3 recognizes diverse natural and synthetic sweeteners. TAS1R3 is essential for the recognition and response to the disaccharide trehalose. Sequence differences within and between species can significantly influence the selectivity and specificity of taste responses. The protein is Taste receptor type 1 member 3 (TAS1R3) of Canis lupus familiaris (Dog).